The sequence spans 352 residues: Ribosomal RNA large subunit methyltransferase M (352 aa).

Residues S184, 217–220, D236, D256, and D272 each bind S-adenosyl-L-methionine; that span reads APGG. Catalysis depends on K301, which acts as the Proton acceptor.

The protein belongs to the class I-like SAM-binding methyltransferase superfamily. RNA methyltransferase RlmE family. RlmM subfamily. As to quaternary structure, monomer.

It is found in the cytoplasm. The enzyme catalyses cytidine(2498) in 23S rRNA + S-adenosyl-L-methionine = 2'-O-methylcytidine(2498) in 23S rRNA + S-adenosyl-L-homocysteine + H(+). Catalyzes the 2'-O-methylation at nucleotide C2498 in 23S rRNA. In Pseudomonas paraeruginosa (strain DSM 24068 / PA7) (Pseudomonas aeruginosa (strain PA7)), this protein is Ribosomal RNA large subunit methyltransferase M.